A 430-amino-acid polypeptide reads, in one-letter code: Protein translocase subunit SecY (430 aa).

The next 10 helical transmembrane spans lie at Ile-18 to Gly-38, Phe-68 to Leu-88, Phe-117 to Leu-137, Val-147 to Leu-167, Phe-174 to Ser-194, Ile-217 to Ala-237, Val-270 to Phe-290, Asn-308 to Val-328, Phe-368 to Met-388, and Gly-389 to Ile-409.

The protein belongs to the SecY/SEC61-alpha family. In terms of assembly, component of the Sec protein translocase complex. Heterotrimer consisting of SecY, SecE and SecG subunits. The heterotrimers can form oligomers, although 1 heterotrimer is thought to be able to translocate proteins. Interacts with the ribosome. Interacts with SecDF, and other proteins may be involved. Interacts with SecA.

It is found in the cell membrane. Its function is as follows. The central subunit of the protein translocation channel SecYEG. Consists of two halves formed by TMs 1-5 and 6-10. These two domains form a lateral gate at the front which open onto the bilayer between TMs 2 and 7, and are clamped together by SecE at the back. The channel is closed by both a pore ring composed of hydrophobic SecY resides and a short helix (helix 2A) on the extracellular side of the membrane which forms a plug. The plug probably moves laterally to allow the channel to open. The ring and the pore may move independently. This chain is Protein translocase subunit SecY, found in Staphylococcus epidermidis (strain ATCC 35984 / DSM 28319 / BCRC 17069 / CCUG 31568 / BM 3577 / RP62A).